A 311-amino-acid chain; its full sequence is MSNASLVTAFILTGLPHAPGLDALLFGIFLVVYVLTVLGNLLILLVIRVDSHLHTPMYYFLTNLSFIDMWFSTVTVPKMLMTLVSPSGRAISFHSCVAQLYFFHFLGSTECFLYTVMSYDRYLAISYPLRYTSMMSGSRCALLATGTWLSGSLHSAVQTILTFHLPYCGPNQIQHYFCDAPPILKLACADTSANVMVIFVDIGIVASGCFVLIVLSYVSIVCSILRIRTSDGRRRAFQTCASHCIVVLCFFVPCVVIYLRPGSMDAMDGVVAIFYTVLTPLLNPVVYTLRNKEVKKAVLKLRDKVAHPQRK.

Topologically, residues 1–23 are extracellular; it reads MSNASLVTAFILTGLPHAPGLDA. N3 carries an N-linked (GlcNAc...) asparagine glycan. A helical membrane pass occupies residues 24–44; that stretch reads LLFGIFLVVYVLTVLGNLLIL. The Cytoplasmic portion of the chain corresponds to 45–52; the sequence is LVIRVDSH. The helical transmembrane segment at 53–73 threads the bilayer; the sequence is LHTPMYYFLTNLSFIDMWFST. Residues 74 to 98 lie on the Extracellular side of the membrane; the sequence is VTVPKMLMTLVSPSGRAISFHSCVA. C96 and C188 are joined by a disulfide. A helical membrane pass occupies residues 99-119; sequence QLYFFHFLGSTECFLYTVMSY. The Cytoplasmic segment spans residues 120 to 138; sequence DRYLAISYPLRYTSMMSGS. The chain crosses the membrane as a helical span at residues 139–159; sequence RCALLATGTWLSGSLHSAVQT. The Extracellular portion of the chain corresponds to 160–196; it reads ILTFHLPYCGPNQIQHYFCDAPPILKLACADTSANVM. A helical membrane pass occupies residues 197–216; sequence VIFVDIGIVASGCFVLIVLS. The Cytoplasmic segment spans residues 217 to 236; that stretch reads YVSIVCSILRIRTSDGRRRA. The helical transmembrane segment at 237–257 threads the bilayer; the sequence is FQTCASHCIVVLCFFVPCVVI. The Extracellular portion of the chain corresponds to 258-268; sequence YLRPGSMDAMD. The chain crosses the membrane as a helical span at residues 269 to 289; the sequence is GVVAIFYTVLTPLLNPVVYTL. Over 290–311 the chain is Cytoplasmic; it reads RNKEVKKAVLKLRDKVAHPQRK.

Belongs to the G-protein coupled receptor 1 family.

The protein resides in the cell membrane. Functionally, odorant receptor. This chain is Olfactory receptor 10G4 (OR10G4), found in Homo sapiens (Human).